The primary structure comprises 325 residues: L-lactate dehydrogenase 1 (325 aa).

Residues Val17, Asp38, Lys43, Tyr68, and 82-83 (GA) each bind NAD(+). Substrate contacts are provided by residues Gln85, Arg91, and 123-126 (NPVD). NAD(+) is bound by residues 121 to 123 (AAN) and Ser146. 151–154 (DTAR) contributes to the substrate binding site. The beta-D-fructose 1,6-bisphosphate site is built by Arg156 and His171. Residue His178 is the Proton acceptor of the active site. Tyr223 is modified (phosphotyrosine). Substrate is bound at residue Thr232.

It belongs to the LDH/MDH superfamily. LDH family. In terms of assembly, homotetramer.

It localises to the cytoplasm. It catalyses the reaction (S)-lactate + NAD(+) = pyruvate + NADH + H(+). Its pathway is fermentation; pyruvate fermentation to lactate; (S)-lactate from pyruvate: step 1/1. With respect to regulation, allosterically activated by fructose 1,6-bisphosphate (FBP). Its function is as follows. Catalyzes the conversion of lactate to pyruvate. This Lactococcus lactis subsp. lactis (strain IL1403) (Streptococcus lactis) protein is L-lactate dehydrogenase 1.